We begin with the raw amino-acid sequence, 329 residues long: 4-hydroxythreonine-4-phosphate dehydrogenase (329 aa).

Substrate-binding residues include H136 and T137. Positions 166, 211, and 266 each coordinate a divalent metal cation. Residues K274, N283, and R292 each coordinate substrate.

This sequence belongs to the PdxA family. Homodimer. Requires Zn(2+) as cofactor. Mg(2+) serves as cofactor. It depends on Co(2+) as a cofactor.

The protein resides in the cytoplasm. It carries out the reaction 4-(phosphooxy)-L-threonine + NAD(+) = 3-amino-2-oxopropyl phosphate + CO2 + NADH. Its pathway is cofactor biosynthesis; pyridoxine 5'-phosphate biosynthesis; pyridoxine 5'-phosphate from D-erythrose 4-phosphate: step 4/5. Functionally, catalyzes the NAD(P)-dependent oxidation of 4-(phosphooxy)-L-threonine (HTP) into 2-amino-3-oxo-4-(phosphooxy)butyric acid which spontaneously decarboxylates to form 3-amino-2-oxopropyl phosphate (AHAP). In Neisseria meningitidis serogroup A / serotype 4A (strain DSM 15465 / Z2491), this protein is 4-hydroxythreonine-4-phosphate dehydrogenase.